The sequence spans 480 residues: UDP-N-acetylmuramoylalanine--D-glutamate ligase (480 aa).

127–133 is a binding site for ATP; it reads GTNGKTT.

The protein belongs to the MurCDEF family.

The protein localises to the cytoplasm. The catalysed reaction is UDP-N-acetyl-alpha-D-muramoyl-L-alanine + D-glutamate + ATP = UDP-N-acetyl-alpha-D-muramoyl-L-alanyl-D-glutamate + ADP + phosphate + H(+). It participates in cell wall biogenesis; peptidoglycan biosynthesis. Its function is as follows. Cell wall formation. Catalyzes the addition of glutamate to the nucleotide precursor UDP-N-acetylmuramoyl-L-alanine (UMA). In Tropheryma whipplei (strain Twist) (Whipple's bacillus), this protein is UDP-N-acetylmuramoylalanine--D-glutamate ligase.